The sequence spans 755 residues: Photosystem I P700 chlorophyll a apoprotein A1 (755 aa).

8 consecutive transmembrane segments (helical) span residues 72 to 95, 158 to 181, 197 to 221, 297 to 315, 352 to 375, 391 to 417, 439 to 461, and 536 to 554; these read IFSA…FHGA, LYCT…FHYH, LNHH…HVSL, TAHH…GHMY, WHAQ…QHMY, LSLF…IFMV, AIIS…LYVH, and FMVH…LILL. Cysteine 578 and cysteine 587 together coordinate [4Fe-4S] cluster. Helical transmembrane passes span 594-615 and 669-691; these read HVFL…HFSW and LSAY…MFLF. Histidine 680 contributes to the chlorophyll a' binding site. Methionine 688 and tyrosine 696 together coordinate chlorophyll a. Tryptophan 697 lines the phylloquinone pocket. The helical transmembrane segment at 729–749 threads the bilayer; it reads AVGVAHYLLGGIATTWAFFLA.

The protein belongs to the PsaA/PsaB family. As to quaternary structure, the PsaA/B heterodimer binds the P700 chlorophyll special pair and subsequent electron acceptors. PSI consists of a core antenna complex that captures photons, and an electron transfer chain that converts photonic excitation into a charge separation. The cyanobacterial PSI reaction center is composed of one copy each of PsaA,B,C,D,E,F,I,J,K,L,M and X, and forms trimeric complexes. The cofactor is PSI electron transfer chain: 5 chlorophyll a, 1 chlorophyll a', 2 phylloquinones and 3 4Fe-4S clusters. PSI core antenna: 90 chlorophyll a, 22 carotenoids, 3 phospholipids and 1 galactolipid. P700 is a chlorophyll a/chlorophyll a' dimer, A0 is one or more chlorophyll a, A1 is one or both phylloquinones and FX is a shared 4Fe-4S iron-sulfur center..

The protein localises to the cellular thylakoid membrane. The enzyme catalyses reduced [plastocyanin] + hnu + oxidized [2Fe-2S]-[ferredoxin] = oxidized [plastocyanin] + reduced [2Fe-2S]-[ferredoxin]. Its function is as follows. PsaA and PsaB bind P700, the primary electron donor of photosystem I (PSI), as well as the electron acceptors A0, A1 and FX. PSI is a plastocyanin/cytochrome c6-ferredoxin oxidoreductase, converting photonic excitation into a charge separation, which transfers an electron from the donor P700 chlorophyll pair to the spectroscopically characterized acceptors A0, A1, FX, FA and FB in turn. Oxidized P700 is reduced on the lumenal side of the thylakoid membrane by plastocyanin or cytochrome c6. In Thermostichus vulcanus (Synechococcus vulcanus), this protein is Photosystem I P700 chlorophyll a apoprotein A1.